Reading from the N-terminus, the 596-residue chain is Two-component response regulator ARR12 (596 aa).

The 116-residue stretch at 18–133 folds into the Response regulatory domain; that stretch reads RVLAVDDDQT…ELKNIWQHVV (116 aa). Asp69 carries the 4-aspartylphosphate modification. A compositionally biased stretch (basic and acidic residues) spans 138-153; the sequence is DKNRGSNNNGDKRDGS. A disordered region spans residues 138–192; the sequence is DKNRGSNNNGDKRDGSGNEGVGNSDQNNGKGNRKRKDQYNEDEDEDRDDNDDSCA. Over residues 158-167 the composition is skewed to polar residues; that stretch reads VGNSDQNNGK. Over residues 177–189 the composition is skewed to acidic residues; that stretch reads NEDEDEDRDDNDD. Positions 194–197 match the Nuclear localization signal motif; sequence KKQR. Residues 197–247 constitute a DNA-binding region (myb-like GARP); that stretch reads RVVWTVELHKKFVAAVNQLGYEKAMPKKILDLMNVEKLTRENVASHLQKFR. Residues 437–467 form a disordered region; sequence NAVSSSTHPPPPAHNSNSINHQFDVSPLPHS. Residues 450–459 show a composition bias toward polar residues; it reads HNSNSINHQF.

It belongs to the ARR family. Type-B subfamily. In terms of assembly, binds the target DNA as a monomer. In terms of processing, two-component system major event consists of a His-to-Asp phosphorelay between a sensor histidine kinase (HK) and a response regulator (RR). In plants, the His-to-Asp phosphorelay involves an additional intermediate named Histidine-containing phosphotransfer protein (HPt). This multistep phosphorelay consists of a His-Asp-His-Asp sequential transfer of a phosphate group between first a His and an Asp of the HK protein, followed by the transfer to a conserved His of the HPt protein and finally the transfer to an Asp in the receiver domain of the RR protein. In terms of tissue distribution, detected in the whole plant. Predominantly expressed in leaves. Expressed at the root transition zone.

The protein resides in the nucleus. Its function is as follows. Transcriptional activator that binds specifically to the DNA sequence 5'-[AG]GATT-3'. Functions as a response regulator involved in His-to-Asp phosphorelay signal transduction system. Phosphorylation of the Asp residue in the receiver domain activates the ability of the protein to promote the transcription of target genes. Could directly activate some type-A response regulators in response to cytokinins. Involved in the root-meristem size determination through the regulation of cell differentiation. Involved in activating SHY2 during meristem growth and controls PIN expression via activation of SHY2. The protein is Two-component response regulator ARR12 (ARR12) of Arabidopsis thaliana (Mouse-ear cress).